Consider the following 657-residue polypeptide: Pentatricopeptide repeat-containing protein At1g11710, mitochondrial (657 aa).

Residues 1–74 (MFGHVFSRRT…REFRSSPKLA (74 aa)) constitute a mitochondrion transit peptide. 14 PPR repeats span residues 147-181 (SPDVFDSLVRACTQNGDAQGAYEVIEQTRAEGFCV), 182-216 (SVHALNNFMGCLLNVNEIDRFWKVYKEMDSLGYVE), 217-251 (NVNTFNLVIYSFCKESKLFEALSVFYRMLKCGVWP), 252-282 (NVVSFNMMIDGACKTGDMRFALQLLGKMGMM), 290-324 (NAVTYNSVINGFCKAGRLDLAERIRGDMVKSGVDC), 325-359 (NERTYGALVDAYGRAGSSDEALRLCDEMTSKGLVV), 360-394 (NTVIYNSIVYWLFMEGDIEGAMSVLRDMNSKNMQI), 395-429 (DRFTQAIVVRGLCRNGYVKEAVEFQRQISEKKLVE), 430-464 (DIVCHNTLMHHFVRDKKLACADQILGSMLVQGLSL), 465-499 (DAISFGTLIDGYLKEGKLERALEIYDGMIKMNKTS), 500-530 (NLVIYNSIVNGLSKRGMAGAAEAVVNAMEIK), 531-565 (DIVTYNTLLNESLKTGNVEEADDILSKMQKQDGEK), 568-602 (SLVTFNIMINHLCKFGSYEKAKEVLKFMVERGVVP), and 603-637 (DSITYGTLITSFSKHRSQEKVVELHDYLILQGVTP).

It belongs to the PPR family. P subfamily.

The protein localises to the mitochondrion. In Arabidopsis thaliana (Mouse-ear cress), this protein is Pentatricopeptide repeat-containing protein At1g11710, mitochondrial.